The chain runs to 208 residues: Type 4 adapter protein LvgA (208 aa).

The segment at 184-208 (GYGYPPESPRENYKHPVSSATTARK) is disordered.

As to quaternary structure, the T4BSS is a complex nanomachine composed of several subcomplexes. This subunit is part of the Type IV Coupling Complex (T4CC), a subcomplex composed of the DotLMNYZ core and the IcmSW-LvgA adapter subunits, linked by the C-terminal tail of DotL.

The protein localises to the cytoplasm. Component of the Dot/Icm type IVB secretion system (T4BSS), which is used to inject bacterial effector proteins into eukaryotic host cells. Part of a subcomplex which recruits effector proteins and delivers them to the core transmembrane subcomplex. Is a critical subunit for binding a subset of effector proteins. Recognizes more than one type of binding motif. May be a critical factor that confers host specificity. Necessary for full virulence of the bacterium in guinea pigs and presumably humans. This Legionella pneumophila protein is Type 4 adapter protein LvgA.